The sequence spans 346 residues: Dihydroorotase (346 aa).

2 residues coordinate Zn(2+): His-17 and His-19. Substrate is bound by residues 19-21 (HLR) and Asn-45. 3 residues coordinate Zn(2+): Lys-103, His-140, and His-178. Lys-103 carries the N6-carboxylysine modification. Residue His-140 participates in substrate binding. Leu-223 provides a ligand contact to substrate. Asp-251 contacts Zn(2+). The active site involves Asp-251. 2 residues coordinate substrate: His-255 and Ala-267.

It belongs to the metallo-dependent hydrolases superfamily. DHOase family. Class II DHOase subfamily. Homodimer. Requires Zn(2+) as cofactor.

It carries out the reaction (S)-dihydroorotate + H2O = N-carbamoyl-L-aspartate + H(+). It functions in the pathway pyrimidine metabolism; UMP biosynthesis via de novo pathway; (S)-dihydroorotate from bicarbonate: step 3/3. Its function is as follows. Catalyzes the reversible cyclization of carbamoyl aspartate to dihydroorotate. This chain is Dihydroorotase, found in Synechococcus sp. (strain RCC307).